The sequence spans 382 residues: Glutamyl-tRNA reductase (382 aa).

Substrate-binding positions include 38–41 (TCNR), Ser85, 90–92 (ENQ), and Gln96. The active-site Nucleophile is Cys39. 164 to 169 (GAGEIG) is an NADP(+) binding site.

The protein belongs to the glutamyl-tRNA reductase family. Homodimer.

It carries out the reaction (S)-4-amino-5-oxopentanoate + tRNA(Glu) + NADP(+) = L-glutamyl-tRNA(Glu) + NADPH + H(+). The protein operates within porphyrin-containing compound metabolism; protoporphyrin-IX biosynthesis; 5-aminolevulinate from L-glutamyl-tRNA(Glu): step 1/2. Catalyzes the NADPH-dependent reduction of glutamyl-tRNA(Glu) to glutamate 1-semialdehyde (GSA). The protein is Glutamyl-tRNA reductase of Methanococcus maripaludis (strain DSM 14266 / JCM 13030 / NBRC 101832 / S2 / LL).